A 522-amino-acid chain; its full sequence is Maturase K (522 aa).

The protein belongs to the intron maturase 2 family. MatK subfamily.

It is found in the plastid. It localises to the chloroplast. In terms of biological role, usually encoded in the trnK tRNA gene intron. Probably assists in splicing its own and other chloroplast group II introns. This is Maturase K from Pillansia templemannii.